The sequence spans 75 residues: Small ribosomal subunit protein eS17 (75 aa).

This sequence belongs to the eukaryotic ribosomal protein eS17 family.

The polypeptide is Small ribosomal subunit protein eS17 (Thermoplasma acidophilum (strain ATCC 25905 / DSM 1728 / JCM 9062 / NBRC 15155 / AMRC-C165)).